Here is a 125-residue protein sequence, read N- to C-terminus: Large ribosomal subunit protein bL12 (125 aa).

It belongs to the bacterial ribosomal protein bL12 family. In terms of assembly, homodimer. Part of the ribosomal stalk of the 50S ribosomal subunit. Forms a multimeric L10(L12)X complex, where L10 forms an elongated spine to which 2 to 4 L12 dimers bind in a sequential fashion. Binds GTP-bound translation factors.

Its function is as follows. Forms part of the ribosomal stalk which helps the ribosome interact with GTP-bound translation factors. Is thus essential for accurate translation. The sequence is that of Large ribosomal subunit protein bL12 from Parabacteroides distasonis (strain ATCC 8503 / DSM 20701 / CIP 104284 / JCM 5825 / NCTC 11152).